The primary structure comprises 109 residues: uncharacterized protein (109 aa).

This is an uncharacterized protein from Microplitis demolitor bracovirus (isolate Webb) (MdBV).